A 312-amino-acid polypeptide reads, in one-letter code: Acetaldehyde dehydrogenase 2 (312 aa).

11–14 (SGNI) contributes to the NAD(+) binding site. Catalysis depends on cysteine 129, which acts as the Acyl-thioester intermediate. Residues 160–168 (SAGPGTRAN) and asparagine 287 contribute to the NAD(+) site.

It belongs to the acetaldehyde dehydrogenase family.

The enzyme catalyses acetaldehyde + NAD(+) + CoA = acetyl-CoA + NADH + H(+). The sequence is that of Acetaldehyde dehydrogenase 2 from Novosphingobium aromaticivorans (strain ATCC 700278 / DSM 12444 / CCUG 56034 / CIP 105152 / NBRC 16084 / F199).